A 190-amino-acid polypeptide reads, in one-letter code: UPF0301 protein TC_0483 (190 aa).

The protein belongs to the UPF0301 (AlgH) family.

This Chlamydia muridarum (strain MoPn / Nigg) protein is UPF0301 protein TC_0483.